The sequence spans 240 residues: tRNA1(Val) (adenine(37)-N6)-methyltransferase (240 aa).

The protein belongs to the methyltransferase superfamily. tRNA (adenine-N(6)-)-methyltransferase family.

The protein localises to the cytoplasm. It carries out the reaction adenosine(37) in tRNA1(Val) + S-adenosyl-L-methionine = N(6)-methyladenosine(37) in tRNA1(Val) + S-adenosyl-L-homocysteine + H(+). Specifically methylates the adenine in position 37 of tRNA(1)(Val) (anticodon cmo5UAC). This chain is tRNA1(Val) (adenine(37)-N6)-methyltransferase, found in Christiangramia forsetii (strain DSM 17595 / CGMCC 1.15422 / KT0803) (Gramella forsetii).